A 215-amino-acid polypeptide reads, in one-letter code: 3-demethoxyubiquinol 3-hydroxylase (215 aa).

Fe cation is bound by residues Glu-64, Glu-94, His-97, Glu-146, Glu-178, and His-181.

It belongs to the COQ7 family. The cofactor is Fe cation.

The protein localises to the cell membrane. The catalysed reaction is a 5-methoxy-2-methyl-3-(all-trans-polyprenyl)benzene-1,4-diol + AH2 + O2 = a 3-demethylubiquinol + A + H2O. The protein operates within cofactor biosynthesis; ubiquinone biosynthesis. In terms of biological role, catalyzes the hydroxylation of 2-nonaprenyl-3-methyl-6-methoxy-1,4-benzoquinol during ubiquinone biosynthesis. The sequence is that of 3-demethoxyubiquinol 3-hydroxylase from Pseudomonas putida (strain GB-1).